We begin with the raw amino-acid sequence, 1453 residues long: MIKCLSVEVQAKLRSGLAISSLGQCVEELALNSIDAEAKCVAVRVNMETFQVQVIDNGFGMGSDDVEKVGNRYFTSKCHSVQDLENPRFYGFRGEALANIADMASAVEISSKKNRTMKTFVKLFQSGKALKACEADVTRASAGTTVTVYNLFYQLPVRRKCMDPRLEFEKVRQRIEALSLMHPSISFSLRNDVSGSMVLQLPKTKDVCSRFCQIYGLGKSQKLREISFKYKEFELSGYISSEAHYNKNMQFLFVNKRLVLRTKLHKLIDFLLRKESIICKPKNGPTSRQMNSSLRHRSTPELYGIYVINVQCQFCEYDVCMEPAKTLIEFQNWDTLLFCIQEGVKMFLKQEKLFVELSGEDIKEFSEDNGFSLFDATLQKRVTSDERSNFQEACNNILDSYEMFNLQSKAVKRKTTAENVNTQSSRDSEATRKNTNDAFLYIYESGGPGHSKMTEPSLQNKDSSCSESKMLEQETIVASEAGENEKHKKSFLEHSSLENPCGTSLEMFLSPFQTPCHFEESGQDLEIWKESTTVNGMAANILKNNRIQNQPKRFKDATEVGCQPLPFATTLWGVHSAQTEKEKKKESSNCGRRNVFSYGRVKLCSTGFITHVVQNEKTKSTETEHSFKNYVRPGPTRAQETFGNRTRHSVETPDIKDLASTLSKESGQLPNKKNCRTNISYGLENEPTATYTMFSAFQEGSKKSQTDCILSDTSPSFPWYRHVSNDSRKTDKLIGFSKPIVRKKLSLSSQLGSLEKFKRQYGKVENPLDTEVEESNGVTTNLSLQVEPDILLKDKNRLENSDVCKITTMEHSDSDSSCQPASHILNSEKFPFSKDEDCLEQQMPSLRESPMTLKELSLFNRKPLDLEKSSESLASKLSRLKGSERETQTMGMMSRFNELPNSDSSRKDSKLCSVLTQDFCMLFNNKHEKTENGVIPTSDSATQDNSFNKNSKTHSNSNTTENCVISETPLVLPYNNSKVTGKDSDVLIRASEQQIGSLDSPSGMLMNPVEDATGDQNGICFQSEESKARACSETEESNTCCSDWQRHFDVALGRMVYVNKMTGLSTFIAPTEDIQAACTKDLTTVAVDVVLENGSQYRCQPFRSDLVLPFLPRARAERTVMRQDNRDTVDDTVSSESLQSLFSEWDNPVFARYPEVAVDVSSGQAESLAVKIHNILYPYRFTKGMIHSMQVLQQVDNKFIACLMSTKTEENGEAGGNLLVLVDQHAAHERIRLEQLIIDSYEKQQAQGSGRKKLLSSTLIPPLEITVTEEQRRLLWCYHKNLEDLGLEFVFPDTSDSLVLVGKVPLCFVEREANELRRGRSTVTKSIVEEFIREQLELLQTTGGIQGTLPLTVQKVLASQACHGAIKFNDGLSLQESCRLIEALSSCQLPFQCAHGRPSMLPLADIDHLEQEKQIKPNLTKLRKMAQAWRLFGKAECDTRQSLQQSMPPCEPP.

Disordered regions lie at residues 624–650 and 933–960; these read EHSFKNYVRPGPTRAQETFGNRTRHSV and GVIPTSDSATQDNSFNKNSKTHSNSNTT. The span at 935–944 shows a compositional bias: polar residues; the sequence is IPTSDSATQD. The segment covering 945 to 960 has biased composition (low complexity); the sequence is NSFNKNSKTHSNSNTT.

The protein belongs to the DNA mismatch repair MutL/HexB family. In terms of assembly, heterodimer of MLH1 and MLH3. Interacts with MTMR15/FAN1. Ubiquitous.

The protein localises to the nucleus. In terms of biological role, probably involved in the repair of mismatches in DNA. The polypeptide is DNA mismatch repair protein Mlh3 (MLH3) (Homo sapiens (Human)).